The following is a 258-amino-acid chain: Deoxyribose-phosphate aldolase (258 aa).

Aspartate 101 serves as the catalytic Proton donor/acceptor. The Schiff-base intermediate with acetaldehyde role is filled by lysine 166. Lysine 200 acts as the Proton donor/acceptor in catalysis.

This sequence belongs to the DeoC/FbaB aldolase family. DeoC type 2 subfamily.

The protein localises to the cytoplasm. The enzyme catalyses 2-deoxy-D-ribose 5-phosphate = D-glyceraldehyde 3-phosphate + acetaldehyde. It functions in the pathway carbohydrate degradation; 2-deoxy-D-ribose 1-phosphate degradation; D-glyceraldehyde 3-phosphate and acetaldehyde from 2-deoxy-alpha-D-ribose 1-phosphate: step 2/2. Its function is as follows. Catalyzes a reversible aldol reaction between acetaldehyde and D-glyceraldehyde 3-phosphate to generate 2-deoxy-D-ribose 5-phosphate. The polypeptide is Deoxyribose-phosphate aldolase (Haemophilus ducreyi (strain 35000HP / ATCC 700724)).